A 530-amino-acid polypeptide reads, in one-letter code: Ubiquitin carboxyl-terminal hydrolase 17-like protein 19 (530 aa).

In terms of domain architecture, USP spans 80–375; sequence AGLQNMGNTC…QAYVLFYIQK (296 aa). Cysteine 89 acts as the Nucleophile in catalysis. Histidine 334 serves as the catalytic Proton acceptor. Composition is skewed to basic and acidic residues over residues 382–392 and 398–413; these read SESVSRGREPR and DTDR…RDHP. Disordered stretches follow at residues 382–413 and 476–530; these read SESV…RDHP and KNHH…LVCQ. Over residues 484–495 the composition is skewed to low complexity; sequence SSLLKLSSTTPT. Polar residues predominate over residues 496 to 505; it reads HQESMNTGTL. The span at 510–524 shows a compositional bias: basic residues; the sequence is GRARRSKGKNKHSKR.

It belongs to the peptidase C19 family. USP17 subfamily.

It localises to the nucleus. The protein localises to the endoplasmic reticulum. The catalysed reaction is Thiol-dependent hydrolysis of ester, thioester, amide, peptide and isopeptide bonds formed by the C-terminal Gly of ubiquitin (a 76-residue protein attached to proteins as an intracellular targeting signal).. Functionally, deubiquitinating enzyme that removes conjugated ubiquitin from specific proteins to regulate different cellular processes that may include cell proliferation, progression through the cell cycle, apoptosis, cell migration, and the cellular response to viral infection. The chain is Ubiquitin carboxyl-terminal hydrolase 17-like protein 19 (USP17L19) from Homo sapiens (Human).